A 612-amino-acid polypeptide reads, in one-letter code: UvrABC system protein C (612 aa).

A GIY-YIG domain is found at 20-98 (THSGVYRMLD…IKQHRPKYNI (79 aa)). Positions 208-243 (SSVLEEISAKMYQASEDMEYEKAQVYRDQLVILRKL) constitute a UVR domain.

It belongs to the UvrC family. Interacts with UvrB in an incision complex.

It is found in the cytoplasm. In terms of biological role, the UvrABC repair system catalyzes the recognition and processing of DNA lesions. UvrC both incises the 5' and 3' sides of the lesion. The N-terminal half is responsible for the 3' incision and the C-terminal half is responsible for the 5' incision. The chain is UvrABC system protein C from Francisella philomiragia subsp. philomiragia (strain ATCC 25017 / CCUG 19701 / FSC 153 / O#319-036).